A 262-amino-acid chain; its full sequence is MKFLALALTILLAAATQAVPMQADAPSQLEHVKVAMMEYMAQVKETGQRSIDLLDDTEFKEYKVQLSQSLDNLQQYAQTTSQSLAPYSEAFGAQLTDAAAAVRAEVMKDVEDVRTQLEPKRAELKEVLDKHIDEYRKKLEPLIKEIVEQRRTELEAFRVKMEPVVEEMRAKVSTNVEETKAKLMPIVETVRAKLTERLEELRTLAAPYAEEYKEQMFKAVGEVREKVGPLTNDFKGQVGPAAEQAKEKLMDFYETISQAMKA.

A signal peptide spans 1–18; the sequence is MKFLALALTILLAAATQA. The tract at residues 32–63 is 3 X approximate tandem repeats; the sequence is VKVAMMEYMAQVKETGQRSIDLLDDTEFKEYK. 2 repeat units span residues 64–85 and 87–107. The 10 X approximate tandem repeats stretch occupies residues 64–262; sequence VQLSQSLDNL…YETISQAMKA (199 aa). A 3; half-length repeat occupies 108-118; sequence KDVEDVRTQLE. 5 consecutive repeat copies span residues 119 to 140, 141 to 162, 163 to 184, 185 to 206, and 207 to 228. Residues 229–239 form a 9; half-length repeat; that stretch reads PLTNDFKGQVG. Repeat unit 10 spans residues 240-262; the sequence is PAAEQAKEKLMDFYETISQAMKA.

The protein belongs to the apolipoprotein A1/A4/E family.

Its subcellular location is the secreted. Its function is as follows. Participates in the reverse transport of cholesterol from tissues to the liver for excretion by promoting cholesterol efflux from tissues and by acting as a cofactor for the lecithin cholesterol acyltransferase (LCAT). This is Apolipoprotein A-I (apoa1) from Salmo trutta (Brown trout).